A 507-amino-acid polypeptide reads, in one-letter code: ATP synthase subunit alpha, chloroplastic (507 aa).

170-177 is a binding site for ATP; that stretch reads GDRQTGKT.

It belongs to the ATPase alpha/beta chains family. F-type ATPases have 2 components, CF(1) - the catalytic core - and CF(0) - the membrane proton channel. CF(1) has five subunits: alpha(3), beta(3), gamma(1), delta(1), epsilon(1). CF(0) has four main subunits: a, b, b' and c.

The protein localises to the plastid. It localises to the chloroplast thylakoid membrane. It catalyses the reaction ATP + H2O + 4 H(+)(in) = ADP + phosphate + 5 H(+)(out). Functionally, produces ATP from ADP in the presence of a proton gradient across the membrane. The alpha chain is a regulatory subunit. The sequence is that of ATP synthase subunit alpha, chloroplastic from Solanum bulbocastanum (Wild potato).